We begin with the raw amino-acid sequence, 717 residues long: Photosystem I P700 chlorophyll a apoprotein A1 (717 aa).

A run of 8 helical transmembrane segments spans residues 58-81 (VFSAHFGQLSIIFLWLSGMYFHGA), 144-167 (LYCTAIGALVFAGLMLFAGWFHYH), 183-207 (LNHHLAGLLGLGSLSWAGHQVHVSL), 279-297 (IAHHHLAIAILFLIAGHMY), 334-357 (WHAQLSLNLAMLGSLTIVVAHHMY), 373-399 (LSLFTHHMWIGGFLIVGAAAHAAIFMV), 421-443 (AIISHLNWACIFLGFHSFGLYIH), and 519-537 (FLVHHIHAFTIHVTVLILL). [4Fe-4S] cluster contacts are provided by Cys561 and Cys570. 2 helical membrane-spanning segments follow: residues 577 to 598 (HVFLGLFWMYNAISVVIFHFSW) and 652 to 674 (LSAYGLFFLGAHFVWAFSLMFLF). Position 663 (His663) interacts with chlorophyll a'. Chlorophyll a-binding residues include Met671 and Tyr679. Trp680 contacts phylloquinone. A helical membrane pass occupies residues 712–717 (AVGVTH).

It belongs to the PsaA/PsaB family. The PsaA/B heterodimer binds the P700 chlorophyll special pair and subsequent electron acceptors. PSI consists of a core antenna complex that captures photons, and an electron transfer chain that converts photonic excitation into a charge separation. The eukaryotic PSI reaction center is composed of at least 11 subunits. P700 is a chlorophyll a/chlorophyll a' dimer, A0 is one or more chlorophyll a, A1 is one or both phylloquinones and FX is a shared 4Fe-4S iron-sulfur center. is required as a cofactor.

Its subcellular location is the plastid. The protein localises to the chloroplast thylakoid membrane. It carries out the reaction reduced [plastocyanin] + hnu + oxidized [2Fe-2S]-[ferredoxin] = oxidized [plastocyanin] + reduced [2Fe-2S]-[ferredoxin]. Functionally, psaA and PsaB bind P700, the primary electron donor of photosystem I (PSI), as well as the electron acceptors A0, A1 and FX. PSI is a plastocyanin-ferredoxin oxidoreductase, converting photonic excitation into a charge separation, which transfers an electron from the donor P700 chlorophyll pair to the spectroscopically characterized acceptors A0, A1, FX, FA and FB in turn. Oxidized P700 is reduced on the lumenal side of the thylakoid membrane by plastocyanin. This Drimys winteri (Winter's bark) protein is Photosystem I P700 chlorophyll a apoprotein A1.